Here is a 352-residue protein sequence, read N- to C-terminus: Peptide chain release factor 1 (352 aa).

Q233 bears the N5-methylglutamine mark. The tract at residues 288-309 (NAKDRKEQVGSGDRSERIRTYN) is disordered. A compositionally biased stretch (basic and acidic residues) spans 289 to 306 (AKDRKEQVGSGDRSERIR).

The protein belongs to the prokaryotic/mitochondrial release factor family. Methylated by PrmC. Methylation increases the termination efficiency of RF1.

The protein localises to the cytoplasm. In terms of biological role, peptide chain release factor 1 directs the termination of translation in response to the peptide chain termination codons UAG and UAA. The chain is Peptide chain release factor 1 (prfA) from Helicobacter pylori (strain J99 / ATCC 700824) (Campylobacter pylori J99).